The sequence spans 154 residues: Endoribonuclease YbeY (154 aa).

Residues His-113, His-117, and His-123 each coordinate Zn(2+).

It belongs to the endoribonuclease YbeY family. It depends on Zn(2+) as a cofactor.

Its subcellular location is the cytoplasm. In terms of biological role, single strand-specific metallo-endoribonuclease involved in late-stage 70S ribosome quality control and in maturation of the 3' terminus of the 16S rRNA. The chain is Endoribonuclease YbeY from Vibrio cholerae serotype O1 (strain ATCC 39541 / Classical Ogawa 395 / O395).